Here is a 394-residue protein sequence, read N- to C-terminus: 1-deoxy-D-xylulose 5-phosphate reductoisomerase (394 aa).

The NADPH site is built by Thr-12, Gly-13, Ser-14, Ile-15, Gly-38, Asn-41, and Asn-132. Lys-133 is a 1-deoxy-D-xylulose 5-phosphate binding site. Glu-134 serves as a coordination point for NADPH. Asp-156 provides a ligand contact to Mn(2+). 1-deoxy-D-xylulose 5-phosphate contacts are provided by Ser-157, Glu-158, Ser-182, and His-205. Glu-158 lines the Mn(2+) pocket. An NADPH-binding site is contributed by Gly-211. 1-deoxy-D-xylulose 5-phosphate-binding residues include Ser-218, Asn-223, Lys-224, and Glu-227. Glu-227 contributes to the Mn(2+) binding site.

Belongs to the DXR family. It depends on Mg(2+) as a cofactor. The cofactor is Mn(2+).

It catalyses the reaction 2-C-methyl-D-erythritol 4-phosphate + NADP(+) = 1-deoxy-D-xylulose 5-phosphate + NADPH + H(+). It functions in the pathway isoprenoid biosynthesis; isopentenyl diphosphate biosynthesis via DXP pathway; isopentenyl diphosphate from 1-deoxy-D-xylulose 5-phosphate: step 1/6. Its function is as follows. Catalyzes the NADPH-dependent rearrangement and reduction of 1-deoxy-D-xylulose-5-phosphate (DXP) to 2-C-methyl-D-erythritol 4-phosphate (MEP). In Pseudarthrobacter chlorophenolicus (strain ATCC 700700 / DSM 12829 / CIP 107037 / JCM 12360 / KCTC 9906 / NCIMB 13794 / A6) (Arthrobacter chlorophenolicus), this protein is 1-deoxy-D-xylulose 5-phosphate reductoisomerase.